The following is a 78-amino-acid chain: Exodeoxyribonuclease 7 small subunit (78 aa).

The protein belongs to the XseB family. In terms of assembly, heterooligomer composed of large and small subunits.

It localises to the cytoplasm. It carries out the reaction Exonucleolytic cleavage in either 5'- to 3'- or 3'- to 5'-direction to yield nucleoside 5'-phosphates.. Bidirectionally degrades single-stranded DNA into large acid-insoluble oligonucleotides, which are then degraded further into small acid-soluble oligonucleotides. This is Exodeoxyribonuclease 7 small subunit from Paracoccus zeaxanthinifaciens.